We begin with the raw amino-acid sequence, 261 residues long: NAD-capped RNA hydrolase NudC (261 aa).

Residue Arg69 coordinates substrate. Positions 98 and 101 each coordinate Zn(2+). Position 111 (Glu111) interacts with substrate. 2 residues coordinate Zn(2+): Cys116 and Cys119. Position 124 (Tyr124) interacts with substrate. In terms of domain architecture, Nudix hydrolase spans 125–248 (PQIAPCIIVA…TVARRLIEDT (124 aa)). Residues Ala158, Glu174, and Glu178 each coordinate a divalent metal cation. Positions 159–180 (GFVEVGETLEQTVAREVMEESS) match the Nudix box motif. 192–199 (QPWPFPQS) contacts substrate. Glu219 is an a divalent metal cation binding site. Substrate is bound at residue Ala241.

It belongs to the Nudix hydrolase family. NudC subfamily. As to quaternary structure, homodimer. Mg(2+) serves as cofactor. The cofactor is Mn(2+). Zn(2+) is required as a cofactor.

The enzyme catalyses a 5'-end NAD(+)-phospho-ribonucleoside in mRNA + H2O = a 5'-end phospho-adenosine-phospho-ribonucleoside in mRNA + beta-nicotinamide D-ribonucleotide + 2 H(+). The catalysed reaction is NAD(+) + H2O = beta-nicotinamide D-ribonucleotide + AMP + 2 H(+). It catalyses the reaction NADH + H2O = reduced beta-nicotinamide D-ribonucleotide + AMP + 2 H(+). In terms of biological role, mRNA decapping enzyme that specifically removes the nicotinamide adenine dinucleotide (NAD) cap from a subset of mRNAs by hydrolyzing the diphosphate linkage to produce nicotinamide mononucleotide (NMN) and 5' monophosphate mRNA. The NAD-cap is present at the 5'-end of some mRNAs and stabilizes RNA against 5'-processing. Has preference for mRNAs with a 5'-end purine. Catalyzes the hydrolysis of a broad range of dinucleotide pyrophosphates. This chain is NAD-capped RNA hydrolase NudC, found in Erwinia tasmaniensis (strain DSM 17950 / CFBP 7177 / CIP 109463 / NCPPB 4357 / Et1/99).